Here is a 520-residue protein sequence, read N- to C-terminus: Aldehyde dehydrogenase 5, mitochondrial (520 aa).

A mitochondrion-targeting transit peptide spans Met1–Tyr23. Gly266–Gly271 lines the NAD(+) pocket. Residue Glu288 is the Proton acceptor of the active site. The Nucleophile role is filled by Cys322.

This sequence belongs to the aldehyde dehydrogenase family.

The protein resides in the mitochondrion matrix. The enzyme catalyses an aldehyde + NADP(+) + H2O = a carboxylate + NADPH + 2 H(+). It carries out the reaction an aldehyde + NAD(+) + H2O = a carboxylate + NADH + 2 H(+). The protein operates within alcohol metabolism; ethanol degradation; acetate from ethanol: step 2/2. With respect to regulation, induced by potassium ions. Its function is as follows. Minor mitochondrial aldehyde dehydrogenase isoform. Plays a role in regulation or biosynthesis of electron transport chain components. Involved in the biosynthesis of acetate during anaerobic growth on glucose. This Saccharomyces cerevisiae (strain YJM789) (Baker's yeast) protein is Aldehyde dehydrogenase 5, mitochondrial (ALD5).